A 303-amino-acid chain; its full sequence is Probable 5-dehydro-4-deoxyglucarate dehydratase (303 aa).

The protein belongs to the DapA family.

The enzyme catalyses 5-dehydro-4-deoxy-D-glucarate + H(+) = 2,5-dioxopentanoate + CO2 + H2O. Its pathway is carbohydrate acid metabolism; D-glucarate degradation; 2,5-dioxopentanoate from D-glucarate: step 2/2. This Pseudomonas putida (strain W619) protein is Probable 5-dehydro-4-deoxyglucarate dehydratase.